A 380-amino-acid chain; its full sequence is Cytochrome b (380 aa).

4 consecutive transmembrane segments (helical) span residues 34–54 (FGSL…LLAM), 78–99 (WLIR…YLHI), 114–134 (WNTG…GYVL), and 179–199 (FFAL…IHLT). The heme b site is built by histidine 84 and histidine 98. Residues histidine 183 and histidine 197 each coordinate heme b. Histidine 202 serves as a coordination point for a ubiquinone. 4 helical membrane-spanning segments follow: residues 227-247 (SKDI…ALLS), 289-309 (LGGV…PFLH), 321-341 (LSQA…WIGS), and 348-368 (FIII…ILLP).

It belongs to the cytochrome b family. The cytochrome bc1 complex contains 11 subunits: 3 respiratory subunits (MT-CYB, CYC1 and UQCRFS1), 2 core proteins (UQCRC1 and UQCRC2) and 6 low-molecular weight proteins (UQCRH/QCR6, UQCRB/QCR7, UQCRQ/QCR8, UQCR10/QCR9, UQCR11/QCR10 and a cleavage product of UQCRFS1). This cytochrome bc1 complex then forms a dimer. Heme b serves as cofactor.

It is found in the mitochondrion inner membrane. In terms of biological role, component of the ubiquinol-cytochrome c reductase complex (complex III or cytochrome b-c1 complex) that is part of the mitochondrial respiratory chain. The b-c1 complex mediates electron transfer from ubiquinol to cytochrome c. Contributes to the generation of a proton gradient across the mitochondrial membrane that is then used for ATP synthesis. In Phalcoboenus australis (Striated caracara), this protein is Cytochrome b (MT-CYB).